A 365-amino-acid chain; its full sequence is Protein-glutamate methylesterase/protein-glutamine glutaminase 1 (365 aa).

The Response regulatory domain occupies 4–121; the sequence is KVLVVDDSQF…SRDSVVLKKR (118 aa). Aspartate 55 bears the 4-aspartylphosphate mark. Residues 138-173 are disordered; sequence AARSTTQPSGVRPSALGANLSSSRSPRPASSAPSAP. Residues 158-172 show a composition bias toward low complexity; it reads SSSRSPRPASSAPSA. Residues 182-365 enclose the CheB-type methylesterase domain; that stretch reads KLVAIGASTG…QVWQRLVSDV (184 aa). Catalysis depends on residues serine 189, histidine 216, and aspartate 310.

It belongs to the CheB family. Phosphorylated by CheA. Phosphorylation of the N-terminal regulatory domain activates the methylesterase activity.

Its subcellular location is the cytoplasm. The catalysed reaction is [protein]-L-glutamate 5-O-methyl ester + H2O = L-glutamyl-[protein] + methanol + H(+). It catalyses the reaction L-glutaminyl-[protein] + H2O = L-glutamyl-[protein] + NH4(+). In terms of biological role, involved in chemotaxis. Part of a chemotaxis signal transduction system that modulates chemotaxis in response to various stimuli. Catalyzes the demethylation of specific methylglutamate residues introduced into the chemoreceptors (methyl-accepting chemotaxis proteins or MCP) by CheR. Also mediates the irreversible deamidation of specific glutamine residues to glutamic acid. The chain is Protein-glutamate methylesterase/protein-glutamine glutaminase 1 from Saccharophagus degradans (strain 2-40 / ATCC 43961 / DSM 17024).